A 249-amino-acid chain; its full sequence is Deoxyribose-phosphate aldolase (249 aa).

The active-site Proton donor/acceptor is D105. K168 functions as the Schiff-base intermediate with acetaldehyde in the catalytic mechanism. K216 acts as the Proton donor/acceptor in catalysis.

This sequence belongs to the DeoC/FbaB aldolase family. DeoC type 1 subfamily.

Its subcellular location is the cytoplasm. It carries out the reaction 2-deoxy-D-ribose 5-phosphate = D-glyceraldehyde 3-phosphate + acetaldehyde. Its pathway is carbohydrate degradation; 2-deoxy-D-ribose 1-phosphate degradation; D-glyceraldehyde 3-phosphate and acetaldehyde from 2-deoxy-alpha-D-ribose 1-phosphate: step 2/2. In terms of biological role, catalyzes a reversible aldol reaction between acetaldehyde and D-glyceraldehyde 3-phosphate to generate 2-deoxy-D-ribose 5-phosphate. This chain is Deoxyribose-phosphate aldolase, found in Corynebacterium jeikeium (strain K411).